The primary structure comprises 193 residues: ATP-dependent Clp protease proteolytic subunit 2 (193 aa).

Ser98 (nucleophile) is an active-site residue. Residue His123 is part of the active site.

The protein belongs to the peptidase S14 family. Fourteen ClpP subunits assemble into 2 heptameric rings which stack back to back to give a disk-like structure with a central cavity, resembling the structure of eukaryotic proteasomes.

It localises to the cytoplasm. The catalysed reaction is Hydrolysis of proteins to small peptides in the presence of ATP and magnesium. alpha-casein is the usual test substrate. In the absence of ATP, only oligopeptides shorter than five residues are hydrolyzed (such as succinyl-Leu-Tyr-|-NHMec, and Leu-Tyr-Leu-|-Tyr-Trp, in which cleavage of the -Tyr-|-Leu- and -Tyr-|-Trp bonds also occurs).. Cleaves peptides in various proteins in a process that requires ATP hydrolysis. Has a chymotrypsin-like activity. Plays a major role in the degradation of misfolded proteins. The chain is ATP-dependent Clp protease proteolytic subunit 2 from Bacillus cereus (strain ATCC 10987 / NRS 248).